The following is a 227-amino-acid chain: Small ribosomal subunit protein uS3 (227 aa).

In terms of domain architecture, KH type-2 spans 38–106; the sequence is LRKFIKDRFY…NVNINIQEIR (69 aa).

The protein belongs to the universal ribosomal protein uS3 family. In terms of assembly, part of the 30S ribosomal subunit. Forms a tight complex with proteins S10 and S14.

Binds the lower part of the 30S subunit head. Binds mRNA in the 70S ribosome, positioning it for translation. This Syntrophomonas wolfei subsp. wolfei (strain DSM 2245B / Goettingen) protein is Small ribosomal subunit protein uS3.